The primary structure comprises 425 residues: Proteinase-activated receptor 1 (425 aa).

A signal peptide spans 1-21 (MGPRRLLLVAACFSLCGPLLS). The propeptide occupies 22–41 (ARTRARRPESKATNATLDPR). Asn35, Asn62, and Asn75 each carry an N-linked (GlcNAc...) asparagine glycan. Over 42–102 (SFLLRNPNDK…SGYLTSSWLT (61 aa)) the chain is Extracellular. Residues 103–128 (LFVPSVYTGVFVVSLPLNIMAIVVFI) form a helical membrane-spanning segment. Over 129-137 (LKMKVKKPA) the chain is Cytoplasmic. A helical transmembrane segment spans residues 138–157 (VVYMLHLATADVLFVSVLPF). The Extracellular segment spans residues 158–176 (KISYYFSGSDWQFGSELCR). Residues Cys175 and Cys254 are joined by a disulfide bond. The helical transmembrane segment at 177–198 (FVTAAFYCNMYASILLMTVISI) threads the bilayer. Over 199 to 218 (DRFLAVVYPMQSLSWRTLGR) the chain is Cytoplasmic. The helical transmembrane segment at 219 to 239 (ASFTCLAIWALAIAGVVPLLL) threads the bilayer. Residues 240–268 (KEQTIQVPGLNITTCHDVLNETLLEGYYA) are Extracellular-facing. N-linked (GlcNAc...) asparagine glycans are attached at residues Asn250 and Asn259. A helical transmembrane segment spans residues 269–288 (YYFSAFSAVFFFVPLIISTV). Over 289 to 311 (CYVSIIRCLSSSAVANRSKKSRA) the chain is Cytoplasmic. The helical transmembrane segment at 312–334 (LFLSAAVFCIFIICFGPTNVLLI) threads the bilayer. The Extracellular portion of the chain corresponds to 335-350 (AHYSFLSHTSTTEAAY). A helical transmembrane segment spans residues 351–374 (FAYLLCVCVSSISCCIDPLIYYYA). Over 375–425 (SSECQRYVYSILCCKESSDPSSYNSSGQLMASKMDTCSSNLNNSIYKKLLT) the chain is Cytoplasmic. At Ser418 the chain carries Phosphoserine.

This sequence belongs to the G-protein coupled receptor 1 family. Post-translationally, proteolytic cleavage by thrombin generates a new N-terminus that functions as a tethered ligand. Also proteolytically cleaved by cathepsin CTSG. Cleavage at 41-Arg-|-Ser-42 by CTSG results in receptor activation while cleavage at 55-Phe-|-Trp-56 results in inhibition of receptor activation. In terms of processing, phosphorylated in the C-terminal tail; probably mediating desensitization prior to the uncoupling and internalization of the receptor. As to expression, platelets and vascular endothelial cells.

It is found in the cell membrane. Functionally, high affinity receptor that binds the activated thrombin, leading to calcium release from intracellular stores. The thrombin-activated receptor signaling pathway is mediated through PTX-insensitive G proteins, activation of phospholipase C resulting in the production of 1D-myo-inositol 1,4,5-trisphosphate (InsP3) which binds to InsP3 receptors causing calcium release from the stores. In astrocytes, the calcium released into the cytosol allows the Ca(2+)-dependent release of L-glutamate into the synaptic cleft through BEST1, that targets the neuronal postsynaptic GRIN2A/NMDAR receptor resulting in the synaptic plasticity regulation. May play a role in platelets activation and in vascular development. Mediates up-regulation of pro-inflammatory cytokines, such as MCP-1/CCL2 and IL6, triggered by coagulation factor Xa (F10) in cardiac fibroblasts and umbilical vein endothelial cells. In Homo sapiens (Human), this protein is Proteinase-activated receptor 1.